The chain runs to 207 residues: Large ribosomal subunit protein bL25 (207 aa).

Belongs to the bacterial ribosomal protein bL25 family. CTC subfamily. As to quaternary structure, part of the 50S ribosomal subunit; part of the 5S rRNA/L5/L18/L25 subcomplex. Contacts the 5S rRNA. Binds to the 5S rRNA independently of L5 and L18.

In terms of biological role, this is one of the proteins that binds to the 5S RNA in the ribosome where it forms part of the central protuberance. The protein is Large ribosomal subunit protein bL25 of Rhizorhabdus wittichii (strain DSM 6014 / CCUG 31198 / JCM 15750 / NBRC 105917 / EY 4224 / RW1) (Sphingomonas wittichii).